Here is a 1129-residue protein sequence, read N- to C-terminus: SMC5-SMC6 complex localization factor protein 2 (1129 aa).

Disordered stretches follow at residues 71–178 (VKAR…SILN), 312–343 (NTSS…TEQA), and 955–1057 (MLYD…QLEG). Positions 72–87 (KARRHTLPHSSHRRSP) are enriched in basic residues. Over residues 93 to 110 (LLFQQRPRNSSGQFTHNP) the composition is skewed to polar residues. Composition is skewed to basic and acidic residues over residues 112-130 (QKKD…KKEL) and 149-166 (RKSE…RPRV). 2 stretches are compositionally biased toward polar residues: residues 169–178 (QATSSSSILN) and 324–343 (TGRS…TEQA). Acidic residues-rich tracts occupy residues 999-1014 (ESEE…EEDW) and 1033-1048 (SAED…EEES).

It belongs to the FAM178 family.

Its subcellular location is the nucleus. Functionally, plays a role in the DNA damage response (DDR) pathway by regulating postreplication repair of UV-damaged DNA and genomic stability maintenance. Promotes the recruitment of the SMC5-SMC6 complex to DNA lesions. This chain is SMC5-SMC6 complex localization factor protein 2 (slf2), found in Danio rerio (Zebrafish).